The following is a 602-amino-acid chain: Major capsid protein (602 aa).

2 disordered regions span residues 149-191 (GSEM…ALEK) and 234-261 (APQP…GQNV). Polar residues predominate over residues 157-167 (NTTTTAQQPGK). The span at 170-191 (NGEHQEPTTRTFAEPKDGALEK) shows a compositional bias: basic and acidic residues.

This sequence belongs to the HK97 phage major capsid protein family.

It is found in the virion. Its function is as follows. Assembles to form an icosahedral capsid. The protein is Major capsid protein of Vreelandella aquamarina (Bacteriophage phiHAP-1).